A 396-amino-acid polypeptide reads, in one-letter code: Probable tRNA sulfurtransferase (396 aa).

Positions 63–166 (AAAARASARV…GRRAYFFDTI (104 aa)) constitute a THUMP domain. ATP-binding positions include 184 to 185 (LY), R266, G288, and Q297.

Belongs to the ThiI family.

Its subcellular location is the cytoplasm. It catalyses the reaction [ThiI sulfur-carrier protein]-S-sulfanyl-L-cysteine + a uridine in tRNA + 2 reduced [2Fe-2S]-[ferredoxin] + ATP + H(+) = [ThiI sulfur-carrier protein]-L-cysteine + a 4-thiouridine in tRNA + 2 oxidized [2Fe-2S]-[ferredoxin] + AMP + diphosphate. The catalysed reaction is [ThiS sulfur-carrier protein]-C-terminal Gly-Gly-AMP + S-sulfanyl-L-cysteinyl-[cysteine desulfurase] + AH2 = [ThiS sulfur-carrier protein]-C-terminal-Gly-aminoethanethioate + L-cysteinyl-[cysteine desulfurase] + A + AMP + 2 H(+). The protein operates within cofactor biosynthesis; thiamine diphosphate biosynthesis. Its function is as follows. Catalyzes the ATP-dependent transfer of a sulfur to tRNA to produce 4-thiouridine in position 8 of tRNAs, which functions as a near-UV photosensor. Also catalyzes the transfer of sulfur to the sulfur carrier protein ThiS, forming ThiS-thiocarboxylate. This is a step in the synthesis of thiazole, in the thiamine biosynthesis pathway. The sulfur is donated as persulfide by IscS. This chain is Probable tRNA sulfurtransferase, found in Aeropyrum pernix (strain ATCC 700893 / DSM 11879 / JCM 9820 / NBRC 100138 / K1).